The chain runs to 146 residues: Zinc metalloproteinase-disintegrin salmosin-3 (146 aa).

The 57-residue stretch at 1-57 (SCPCDANSCIMSATLSNEPSSRFSDCSFSLPSRFSDCSFNQYSSDIIHYHECLLNEP) folds into the Peptidase M12B domain. Disulfide bonds link Cys2/Cys37, Cys4/Cys9, Cys68/Cys87, Cys79/Cys97, Cys81/Cys92, Cys91/Cys114, Cys105/Cys111, Cys110/Cys135, and Cys123/Cys142. The Disintegrin domain occupies 65-146 (PPVCGNYYPE…GQSGVCPRNT (82 aa)). The short motif at 127–129 (RGD) is the Cell attachment site element.

The protein belongs to the venom metalloproteinase (M12B) family. P-II subfamily. P-IIb sub-subfamily. As to quaternary structure, monomer (disintegrin). The cofactor is Zn(2+). Expressed by the venom gland.

It is found in the secreted. Its function is as follows. Snake venom zinc metalloproteinase that inhibits ADP-induced platelet aggregation (probably by binding integrin alpha-IIb/beta-3 (ITGA2B/ITGB3)) and degrades fibrinogen. This Gloydius brevicauda (Korean slamosa snake) protein is Zinc metalloproteinase-disintegrin salmosin-3.